Consider the following 390-residue polypeptide: Mannitol-1-phosphate 5-dehydrogenase (390 aa).

7-18 contacts NAD(+); it reads AVHFGGGNIGRG. The active site involves K216.

It belongs to the mannitol dehydrogenase family. In terms of assembly, monomer.

The enzyme catalyses D-mannitol 1-phosphate + NAD(+) = beta-D-fructose 6-phosphate + NADH + H(+). Its function is as follows. Catalyzes the NAD(H)-dependent interconversion of D-fructose 6-phosphate and D-mannitol 1-phosphate in the mannitol metabolic pathway. Required for the process of sporulation on senescing leaf material. This chain is Mannitol-1-phosphate 5-dehydrogenase (mpd1), found in Phaeosphaeria nodorum (strain SN15 / ATCC MYA-4574 / FGSC 10173) (Glume blotch fungus).